The primary structure comprises 255 residues: tRNA (guanine-N(1)-)-methyltransferase (255 aa).

Residues Gly-113 and 133–138 (IGDYVL) each bind S-adenosyl-L-methionine.

This sequence belongs to the RNA methyltransferase TrmD family. As to quaternary structure, homodimer.

The protein resides in the cytoplasm. It carries out the reaction guanosine(37) in tRNA + S-adenosyl-L-methionine = N(1)-methylguanosine(37) in tRNA + S-adenosyl-L-homocysteine + H(+). Its function is as follows. Specifically methylates guanosine-37 in various tRNAs. The chain is tRNA (guanine-N(1)-)-methyltransferase from Escherichia coli O81 (strain ED1a).